Here is a 392-residue protein sequence, read N- to C-terminus: Extracellular metalloproteinase 4 (392 aa).

Residues 1-9 constitute a propeptide that is removed on maturation; sequence VHSVVDYVS. Asn176 is a glycosylation site (N-linked (GlcNAc...) asparagine). His193 is a Zn(2+) binding site. Glu194 is a catalytic residue. Position 197 (His197) interacts with Zn(2+). 2 N-linked (GlcNAc...) asparagine glycosylation sites follow: Asn359 and Asn385.

This sequence belongs to the peptidase M36 family. It depends on Zn(2+) as a cofactor.

Its subcellular location is the secreted. Functionally, secreted metalloproteinase probably acting as a virulence factor. This is Extracellular metalloproteinase 4 (MEP4) from Trichophyton soudanense.